A 229-amino-acid polypeptide reads, in one-letter code: NAD(P)H-quinone oxidoreductase subunit K, chloroplastic (229 aa).

Positions 43, 44, 108, and 139 each coordinate [4Fe-4S] cluster.

It belongs to the complex I 20 kDa subunit family. As to quaternary structure, NDH is composed of at least 16 different subunits, 5 of which are encoded in the nucleus. It depends on [4Fe-4S] cluster as a cofactor.

The protein localises to the plastid. Its subcellular location is the chloroplast thylakoid membrane. It carries out the reaction a plastoquinone + NADH + (n+1) H(+)(in) = a plastoquinol + NAD(+) + n H(+)(out). It catalyses the reaction a plastoquinone + NADPH + (n+1) H(+)(in) = a plastoquinol + NADP(+) + n H(+)(out). Its function is as follows. NDH shuttles electrons from NAD(P)H:plastoquinone, via FMN and iron-sulfur (Fe-S) centers, to quinones in the photosynthetic chain and possibly in a chloroplast respiratory chain. The immediate electron acceptor for the enzyme in this species is believed to be plastoquinone. Couples the redox reaction to proton translocation, and thus conserves the redox energy in a proton gradient. In Aethionema cordifolium (Lebanon stonecress), this protein is NAD(P)H-quinone oxidoreductase subunit K, chloroplastic.